Consider the following 204-residue polypeptide: FMN-dependent NADH:quinone oxidoreductase 5 (204 aa).

Ser-10 contributes to the FMN binding site.

The protein belongs to the azoreductase type 1 family. In terms of assembly, homodimer. FMN is required as a cofactor.

The catalysed reaction is 2 a quinone + NADH + H(+) = 2 a 1,4-benzosemiquinone + NAD(+). It catalyses the reaction N,N-dimethyl-1,4-phenylenediamine + anthranilate + 2 NAD(+) = 2-(4-dimethylaminophenyl)diazenylbenzoate + 2 NADH + 2 H(+). Functionally, quinone reductase that provides resistance to thiol-specific stress caused by electrophilic quinones. In terms of biological role, also exhibits azoreductase activity. Catalyzes the reductive cleavage of the azo bond in aromatic azo compounds to the corresponding amines. This chain is FMN-dependent NADH:quinone oxidoreductase 5, found in Burkholderia lata (strain ATCC 17760 / DSM 23089 / LMG 22485 / NCIMB 9086 / R18194 / 383).